Consider the following 132-residue polypeptide: MAEKLNFDLVSPERLLFSGQVDMVVIPGSEGDMGIMAGHAPVMSTLRPGIIEVENEGAPRQRIFVRGGFAEVTPAGLTVLAEFTVPLADLDATALDREIALADKDVADAKNDDKRQSALEKLDHLKELRHTV.

Belongs to the ATPase epsilon chain family. As to quaternary structure, F-type ATPases have 2 components, CF(1) - the catalytic core - and CF(0) - the membrane proton channel. CF(1) has five subunits: alpha(3), beta(3), gamma(1), delta(1), epsilon(1). CF(0) has three main subunits: a, b and c.

It is found in the cell inner membrane. Produces ATP from ADP in the presence of a proton gradient across the membrane. In Parvibaculum lavamentivorans (strain DS-1 / DSM 13023 / NCIMB 13966), this protein is ATP synthase epsilon chain.